A 429-amino-acid polypeptide reads, in one-letter code: Glutamate-1-semialdehyde 2,1-aminomutase (429 aa).

At K267 the chain carries N6-(pyridoxal phosphate)lysine.

The protein belongs to the class-III pyridoxal-phosphate-dependent aminotransferase family. HemL subfamily. Homodimer. The cofactor is pyridoxal 5'-phosphate.

The protein resides in the cytoplasm. The catalysed reaction is (S)-4-amino-5-oxopentanoate = 5-aminolevulinate. The protein operates within porphyrin-containing compound metabolism; protoporphyrin-IX biosynthesis; 5-aminolevulinate from L-glutamyl-tRNA(Glu): step 2/2. In Xanthomonas euvesicatoria pv. vesicatoria (strain 85-10) (Xanthomonas campestris pv. vesicatoria), this protein is Glutamate-1-semialdehyde 2,1-aminomutase.